Consider the following 257-residue polypeptide: AT-hook motif nuclear-localized protein 16 (257 aa).

The segment at 1–71 (MAGGTALTPT…SKNKPKPPII (71 aa)) is disordered. Positions 53 to 65 (KRPRGRPAGSKNK) form a DNA-binding region, a.T hook. Positions 77 to 214 (PNSLRANAVE…DEAASMQNQQ (138 aa)) constitute a PPC domain.

Interacts with FVE/MSI4 and MSI5 which are components of HDAC corepressor complexes. As to expression, preferentially expressed in the inflorescence meristem and young floral buds, as well as in seedling-stage vegetative meristems. Widely expressed in flowers, roots and stems, with relatively low expression in leaves.

The protein resides in the nucleus. Functionally, transcription factor that specifically binds AT-rich DNA sequences related to the nuclear matrix attachment regions (MARs). Encodes a nuclear matrix protein that acts in the maintenance of genomic integrity by silencing TEs and repeat-containing genes through epigenetic machinery. Acts as a chromatin remodeling factor that modifies the architecture of FLC and FWA chromatin by modulating both H3 acetylation and methylation leading to the regulation of FLC and FWA expression. Negatively regulates floral repressors including MAF4 and MAF5. Plays a transcription activation role in anther development. Regulates the expression of arabinogalactan proteins (AGPs) involved in the formation of the nexine layer of the pollen wall. Binds AGP6, AGP11, AGP23 and AGP40 promoters. The protein is AT-hook motif nuclear-localized protein 16 of Arabidopsis thaliana (Mouse-ear cress).